A 333-amino-acid chain; its full sequence is Fructose-1,6-bisphosphatase class 1 (333 aa).

Residues glutamate 90, aspartate 112, leucine 114, and aspartate 115 each coordinate Mg(2+). Residues 115–118, asparagine 207, and lysine 273 contribute to the substrate site; that span reads DGSS. Glutamate 279 lines the Mg(2+) pocket.

It belongs to the FBPase class 1 family. As to quaternary structure, homotetramer. Requires Mg(2+) as cofactor.

Its subcellular location is the cytoplasm. It catalyses the reaction beta-D-fructose 1,6-bisphosphate + H2O = beta-D-fructose 6-phosphate + phosphate. The protein operates within carbohydrate biosynthesis; gluconeogenesis. This is Fructose-1,6-bisphosphatase class 1 from Azoarcus sp. (strain BH72).